Consider the following 565-residue polypeptide: CTP synthase (565 aa).

The tract at residues 1–272 (MARPKNVKHI…DLRVMKKLGL (272 aa)) is amidoligase domain. Position 18 (Ser18) interacts with CTP. Ser18 serves as a coordination point for UTP. 19–24 (SLGKGI) is an ATP binding site. Tyr59 is a binding site for L-glutamine. An ATP-binding site is contributed by Asp76. Mg(2+)-binding residues include Asp76 and Glu146. CTP is bound by residues 153-155 (DIE), 193-198 (KTKPTQ), and Lys229. UTP is bound by residues 193 to 198 (KTKPTQ) and Lys229. In terms of domain architecture, Glutamine amidotransferase type-1 spans 299–543 (TIGVCGKYTE…VQAAKEFAMG (245 aa)). Residue Gly363 coordinates L-glutamine. Cys390 serves as the catalytic Nucleophile; for glutamine hydrolysis. Residues 391–394 (LGMQ), Glu414, and Arg471 contribute to the L-glutamine site. Residues His516 and Glu518 contribute to the active site.

This sequence belongs to the CTP synthase family. As to quaternary structure, homotetramer.

It carries out the reaction UTP + L-glutamine + ATP + H2O = CTP + L-glutamate + ADP + phosphate + 2 H(+). The enzyme catalyses L-glutamine + H2O = L-glutamate + NH4(+). The catalysed reaction is UTP + NH4(+) + ATP = CTP + ADP + phosphate + 2 H(+). Its pathway is pyrimidine metabolism; CTP biosynthesis via de novo pathway; CTP from UDP: step 2/2. Its activity is regulated as follows. Allosterically activated by GTP, when glutamine is the substrate; GTP has no effect on the reaction when ammonia is the substrate. The allosteric effector GTP functions by stabilizing the protein conformation that binds the tetrahedral intermediate(s) formed during glutamine hydrolysis. Inhibited by the product CTP, via allosteric rather than competitive inhibition. Its function is as follows. Catalyzes the ATP-dependent amination of UTP to CTP with either L-glutamine or ammonia as the source of nitrogen. Regulates intracellular CTP levels through interactions with the four ribonucleotide triphosphates. This chain is CTP synthase, found in Chlorobaculum parvum (strain DSM 263 / NCIMB 8327) (Chlorobium vibrioforme subsp. thiosulfatophilum).